The primary structure comprises 155 residues: PBAN-type neuropeptides (155 aa).

Isoleucine 8 carries the isoleucine amide modification. Residues 12-55 (SLRMATEDNRQAFFKLLEAADALKYYYDQLPYEMQADEPETRVT) constitute a propeptide that is removed on maturation. A leucine amide mark is found at leucine 64, leucine 84, leucine 120, and leucine 130. Residues 133–155 (ELAYEMVPSKIRVVRSTNKTQST) constitute a propeptide that is removed on maturation.

This sequence belongs to the pyrokinin family.

It is found in the secreted. A hormone that controls sex pheromone production in females and pheromone responsiveness in male. Also mediates visceral muscle contractile activity (myotropic activity). The chain is PBAN-type neuropeptides (PBAN) from Mamestra brassicae (Cabbage moth).